We begin with the raw amino-acid sequence, 1054 residues long: FERM, ARHGEF and pleckstrin domain-containing protein 2 (1054 aa).

The region spanning leucine 44–aspartate 324 is the FERM domain. A phosphoserine mark is found at serine 389 and serine 439. The interval glutamate 421–arginine 527 is disordered. The span at proline 468–proline 492 shows a compositional bias: low complexity. The DH domain occupies glutamate 535 to isoleucine 726. The PH 1 domain occupies glutamate 755–glutamine 852. Residues serine 856 to arginine 894 are disordered. Residues glutamate 929–serine 1026 enclose the PH 2 domain. Residues glycine 1029–glutamate 1054 are disordered.

As to quaternary structure, interacts with PLXNA1. Interaction with PLXNA1 or PIP5K1C lowers its guanine nucleotide exchange activity. Dissociates from PLXNA1 when SEMA3A binds to the receptor. Interacts with PIP5K1C via its FERM domain. The interaction with PIP5K1C is enhanced by SEMA3A binding. Interacts with RAC1.

Functionally, functions as a guanine nucleotide exchange factor that activates RAC1. May have relatively low activity. Plays a role in the response to class 3 semaphorins and remodeling of the actin cytoskeleton. Plays a role in TNFSF11-mediated osteoclast differentiation, especially in podosome rearrangement and reorganization of the actin cytoskeleton. Regulates the activation of ITGB3, integrin signaling and cell adhesion. The protein is FERM, ARHGEF and pleckstrin domain-containing protein 2 (FARP2) of Homo sapiens (Human).